A 185-amino-acid chain; its full sequence is Large ribosomal subunit protein uL5 (185 aa).

Belongs to the universal ribosomal protein uL5 family. As to quaternary structure, part of the 50S ribosomal subunit; part of the 5S rRNA/L5/L18/L25 subcomplex. Contacts the 5S rRNA and the P site tRNA. Forms a bridge to the 30S subunit in the 70S ribosome.

This is one of the proteins that bind and probably mediate the attachment of the 5S RNA into the large ribosomal subunit, where it forms part of the central protuberance. In the 70S ribosome it contacts protein S13 of the 30S subunit (bridge B1b), connecting the 2 subunits; this bridge is implicated in subunit movement. Contacts the P site tRNA; the 5S rRNA and some of its associated proteins might help stabilize positioning of ribosome-bound tRNAs. This chain is Large ribosomal subunit protein uL5, found in Bradyrhizobium sp. (strain BTAi1 / ATCC BAA-1182).